A 240-amino-acid polypeptide reads, in one-letter code: MATKIFSLLMLLALSACVANATIFPQCSQAPIASLLPPYLPSMIASVCENPALQPYRLQQAIAASNIPLSPLLFQQSPALSLVQSLVQTIRAQQLQQLVLPVINQVALANLSPYSQQQQFLPFNQLSTLNPAAYLQQQLLPFSQLATAYSQQQQLLPFNQLAALNPAAYLQQQILLPFSQLAAANRASFLTQQQLLPFYQQFAANPATLLQLQQLLPFVQLALTDPAASYQQHIIGGALF.

The first 21 residues, 1 to 21, serve as a signal peptide directing secretion; that stretch reads MATKIFSLLMLLALSACVANA.

It belongs to the zein family.

In terms of biological role, zeins are major seed storage proteins. The sequence is that of Zein-alpha A20 from Zea mays (Maize).